The primary structure comprises 354 residues: Uroporphyrinogen decarboxylase (354 aa).

Substrate is bound by residues 27-31, Asp-77, Tyr-154, Ser-209, and His-327; that span reads RQAGR.

The protein belongs to the uroporphyrinogen decarboxylase family. In terms of assembly, homodimer.

The protein localises to the cytoplasm. It carries out the reaction uroporphyrinogen III + 4 H(+) = coproporphyrinogen III + 4 CO2. It functions in the pathway porphyrin-containing compound metabolism; protoporphyrin-IX biosynthesis; coproporphyrinogen-III from 5-aminolevulinate: step 4/4. In terms of biological role, catalyzes the decarboxylation of four acetate groups of uroporphyrinogen-III to yield coproporphyrinogen-III. The protein is Uroporphyrinogen decarboxylase of Shewanella halifaxensis (strain HAW-EB4).